Here is a 496-residue protein sequence, read N- to C-terminus: Probable diguanylate cyclase DgcJ (496 aa).

2 helical membrane passes run 11–31 (FIAA…LVAS) and 305–325 (ILYF…TALI). Positions 374 to 496 (SSVMFIAIDM…VNKQNKNSRS (123 aa)) constitute a GGDEF domain. Aspartate 382 is a Mg(2+) binding site. 3 residues coordinate substrate: asparagine 390, histidine 395, and aspartate 399. Aspartate 425 provides a ligand contact to Mg(2+). The Proton acceptor role is filled by aspartate 425.

Homodimer. Requires Mg(2+) as cofactor.

Its subcellular location is the cell inner membrane. The enzyme catalyses 2 GTP = 3',3'-c-di-GMP + 2 diphosphate. It participates in purine metabolism; 3',5'-cyclic di-GMP biosynthesis. Its function is as follows. Catalyzes the synthesis of cyclic-di-GMP (c-di-GMP) via the condensation of 2 GTP molecules. In Escherichia coli (strain K12), this protein is Probable diguanylate cyclase DgcJ.